A 423-amino-acid polypeptide reads, in one-letter code: Lysosomal acid phosphatase (423 aa).

Positions methionine 1 to alanine 30 are cleaved as a signal peptide. At arginine 31–glutamate 380 the chain is on the lumenal side. The active-site Nucleophile is histidine 42. Asparagine 92, asparagine 133, asparagine 167, asparagine 177, asparagine 191, and asparagine 267 each carry an N-linked (GlcNAc...) asparagine glycan. 3 disulfides stabilise this stretch: cysteine 159-cysteine 370, cysteine 212-cysteine 310, and cysteine 345-cysteine 349. Aspartate 287 functions as the Proton donor in the catalytic mechanism. N-linked (GlcNAc...) asparagine glycans are attached at residues asparagine 322 and asparagine 331. Residues valine 381 to threonine 401 form a helical membrane-spanning segment. Residues valine 402–alanine 423 are Cytoplasmic-facing.

Belongs to the histidine acid phosphatase family. In terms of processing, the membrane-bound form is converted to the soluble form by sequential proteolytic processing. First, the C-terminal cytoplasmic tail is removed. Cleavage by a lysosomal protease releases the soluble form in the lysosome lumen. Post-translationally, N-glycosylated. The intermediates formed during enzymatic deglycosylation suggest that all eight predicted N-glycosylation sites are used.

It localises to the lysosome membrane. It is found in the lysosome lumen. It carries out the reaction a phosphate monoester + H2O = an alcohol + phosphate. The chain is Lysosomal acid phosphatase (ACP2) from Homo sapiens (Human).